A 219-amino-acid polypeptide reads, in one-letter code: MDTWHDALGGEKQQPYFQEILNAVRQERLSGQIIYPPEADVFNAFRLTAFDRVKVVILGQDPYHGVGQAHGLAFSVRQGVRIPPSLLNIYKELETDIEGFSIPAHGCLTAWAEQGILLLNTVLTVRAGQAHSHALLGWERFTDTVIRQLATHRKHLVFMLWGGYAQQKGRLIDSQNHLILTAPHPSPLSAYRGFFGCRHFSQANSYLSQHGIEPINWKL.

D61 functions as the Proton acceptor in the catalytic mechanism.

Belongs to the uracil-DNA glycosylase (UDG) superfamily. UNG family.

Its subcellular location is the cytoplasm. It catalyses the reaction Hydrolyzes single-stranded DNA or mismatched double-stranded DNA and polynucleotides, releasing free uracil.. In terms of biological role, excises uracil residues from the DNA which can arise as a result of misincorporation of dUMP residues by DNA polymerase or due to deamination of cytosine. This Neisseria gonorrhoeae (strain ATCC 700825 / FA 1090) protein is Uracil-DNA glycosylase.